The sequence spans 71 residues: Palustrin-2AJ2 (71 aa).

A signal peptide spans 1–22 (MFTLKKPLLVLLFLGTVSLSLC). A propeptide spanning residues 23–40 (EQERAADDDEGEVIEEEV) is cleaved from the precursor. Cys65 and Cys71 form a disulfide bridge.

As to expression, expressed by the skin glands.

The protein localises to the secreted. Displays broad-spectrum antibacterial activity against a range of Gram-positive and Gram-negative bacteria. Has low hemolytic activity, low cytotoxicity and low antioxidant activity. The protein is Palustrin-2AJ2 of Amolops jingdongensis (Chinese torrent frog).